Here is a 126-residue protein sequence, read N- to C-terminus: Aspartate 1-decarboxylase 2 (126 aa).

The active-site Schiff-base intermediate with substrate; via pyruvic acid is Ser25. Ser25 is modified (pyruvic acid (Ser)). Position 57 (Thr57) interacts with substrate. The active-site Proton donor is Tyr58. 73–75 is a binding site for substrate; sequence GSA.

It belongs to the PanD family. In terms of assembly, heterooctamer of four alpha and four beta subunits. Pyruvate is required as a cofactor. Post-translationally, is synthesized initially as an inactive proenzyme, which is activated by self-cleavage at a specific serine bond to produce a beta-subunit with a hydroxyl group at its C-terminus and an alpha-subunit with a pyruvoyl group at its N-terminus.

It is found in the cytoplasm. The catalysed reaction is L-aspartate + H(+) = beta-alanine + CO2. It functions in the pathway cofactor biosynthesis; (R)-pantothenate biosynthesis; beta-alanine from L-aspartate: step 1/1. Its function is as follows. Catalyzes the pyruvoyl-dependent decarboxylation of aspartate to produce beta-alanine. In Polaromonas sp. (strain JS666 / ATCC BAA-500), this protein is Aspartate 1-decarboxylase 2.